The sequence spans 324 residues: Phospho-N-acetylmuramoyl-pentapeptide-transferase (324 aa).

10 helical membrane passes run 9 to 29, 53 to 73, 77 to 97, 117 to 137, 147 to 167, 176 to 196, 201 to 221, 227 to 247, 253 to 273, and 304 to 324; these read TFAV…PFLV, TMGA…FSFI, VSAA…LGFL, FLGQ…NGFA, IEVD…VGFS, LDGL…VIAF, MDVA…LLFN, IFMG…ISIL, LLLL…LQVF, and VLTF…VVIF.

Belongs to the glycosyltransferase 4 family. MraY subfamily. The cofactor is Mg(2+).

It is found in the cell membrane. It catalyses the reaction UDP-N-acetyl-alpha-D-muramoyl-L-alanyl-gamma-D-glutamyl-meso-2,6-diaminopimeloyl-D-alanyl-D-alanine + di-trans,octa-cis-undecaprenyl phosphate = di-trans,octa-cis-undecaprenyl diphospho-N-acetyl-alpha-D-muramoyl-L-alanyl-D-glutamyl-meso-2,6-diaminopimeloyl-D-alanyl-D-alanine + UMP. It participates in cell wall biogenesis; peptidoglycan biosynthesis. Functionally, catalyzes the initial step of the lipid cycle reactions in the biosynthesis of the cell wall peptidoglycan: transfers peptidoglycan precursor phospho-MurNAc-pentapeptide from UDP-MurNAc-pentapeptide onto the lipid carrier undecaprenyl phosphate, yielding undecaprenyl-pyrophosphoryl-MurNAc-pentapeptide, known as lipid I. The polypeptide is Phospho-N-acetylmuramoyl-pentapeptide-transferase (Listeria monocytogenes serotype 4b (strain CLIP80459)).